The primary structure comprises 280 residues: Phosphatidylglycerol--prolipoprotein diacylglyceryl transferase (280 aa).

3 helical membrane-spanning segments follow: residues Trp21–Gly41, Leu54–Glu74, and Ile88–Ile108. Arg136 lines the a 1,2-diacyl-sn-glycero-3-phospho-(1'-sn-glycerol) pocket. A run of 3 helical transmembrane segments spans residues Gln176–Leu196, Gly206–Met226, and Ile236–Ile256.

Belongs to the Lgt family.

It localises to the cell membrane. The enzyme catalyses L-cysteinyl-[prolipoprotein] + a 1,2-diacyl-sn-glycero-3-phospho-(1'-sn-glycerol) = an S-1,2-diacyl-sn-glyceryl-L-cysteinyl-[prolipoprotein] + sn-glycerol 1-phosphate + H(+). The protein operates within protein modification; lipoprotein biosynthesis (diacylglyceryl transfer). Functionally, catalyzes the transfer of the diacylglyceryl group from phosphatidylglycerol to the sulfhydryl group of the N-terminal cysteine of a prolipoprotein, the first step in the formation of mature lipoproteins. The chain is Phosphatidylglycerol--prolipoprotein diacylglyceryl transferase from Lactobacillus acidophilus (strain ATCC 700396 / NCK56 / N2 / NCFM).